A 362-amino-acid chain; its full sequence is S-adenosylmethionine-dependent nucleotide dehydratase RSAD2 (362 aa).

Positions 47 to 73 (EQPQVRGEPEDTQETQEDGNSTQPTTP) are disordered. A compositionally biased stretch (polar residues) spans 64-73 (DGNSTQPTTP). The Radical SAM core domain maps to 70 to 290 (PTTPVSVNYH…LERHKEVSCL (221 aa)). 3 residues coordinate [4Fe-4S] cluster: Cys84, Cys88, and Cys91. Lys198 is subject to N6-acetyllysine. Residue Lys207 forms a Glycyl lysine isopeptide (Lys-Gly) (interchain with G-Cter in ubiquitin) linkage.

The protein belongs to the radical SAM superfamily. RSAD2 family. Homodimer. Interacts with IRAK1 and TRAF6. Interacts with FPPS. Interacts with HADHB. Interacts (via C-terminus) with VAPA/VAP33 (via C-terminus). The cofactor is [4Fe-4S] cluster. In terms of processing, acetylated by HAT1. HAT1-mediated acetylation of Lys-198 in turn recruits UBE4A that stimulates RSAD2 polyubiquitination leading to proteasomal degradation. Post-translationally, 'Lys-6'-linked polyubiquitination at Lys-207 leads to RSAD2 protein degradation. As to expression, expressed at higher levels in atherosclerotic arteries than in normal arteries.

It localises to the endoplasmic reticulum membrane. The protein localises to the golgi apparatus. Its subcellular location is the endoplasmic reticulum. The protein resides in the lipid droplet. It is found in the mitochondrion. It localises to the mitochondrion inner membrane. The protein localises to the mitochondrion outer membrane. It carries out the reaction CTP + AH2 + S-adenosyl-L-methionine = 3'-deoxy-3',4'-didehydro-CTP + 5'-deoxyadenosine + L-methionine + A + H2O + H(+). Its activity is regulated as follows. IRAK1 and TRAF6 synergistically activate RSAD2 increasing its activity with CTP as substrate about 10-fold. Functionally, interferon-inducible antiviral protein which plays a major role in the cell antiviral state induced by type I and type II interferon. Catalyzes the conversion of cytidine triphosphate (CTP) to 3'-deoxy-3',4'-didehydro-CTP (ddhCTP) via a SAM-dependent radical mechanism. In turn, ddhCTP acts as a chain terminator for the RNA-dependent RNA polymerases from multiple viruses and directly inhibits viral replication. Therefore, inhibits a wide range of DNA and RNA viruses. Also promotes TLR7 and TLR9-dependent production of IFN-beta production in plasmacytoid dendritic cells (pDCs) by facilitating 'Lys-63'-linked ubiquitination of IRAK1 by TRAF6. Plays a role in CD4+ T-cells activation and differentiation. Facilitates T-cell receptor (TCR)-mediated GATA3 activation and optimal T-helper 2 (Th2) cytokine production by modulating NFKB1 and JUNB activities. Can inhibit secretion of soluble proteins. In Mus musculus (Mouse), this protein is S-adenosylmethionine-dependent nucleotide dehydratase RSAD2.